Consider the following 1701-residue polypeptide: Merozoite surface protein 1 (1701 aa).

An N-terminal signal peptide occupies residues 1–19 (MKIIFFLCSFLFFIINTQC). A compositionally biased stretch (gly residues) spans 89-100 (GSGGSVASGGSG). Residues 89 to 118 (GSGGSVASGGSGNSRRTNPSDNSSDSNTKT) form a disordered region. The segment covering 101-116 (NSRRTNPSDNSSDSNT) has biased composition (low complexity). Asparagine 110 and asparagine 239 each carry an N-linked (GlcNAc...) asparagine glycan. A disordered region spans residues 322–344 (DAENPTTGSKPNPLPENKKKEVE). N-linked (GlcNAc...) asparagine glycosylation is found at asparagine 470, asparagine 536, and asparagine 607. The tract at residues 704–739 (SETTEDGGHSTHTLSQSGETEVTEETEVTEETVGHT) is disordered. Positions 724–733 (EVTEETEVTE) are enriched in acidic residues. Asparagine 802, asparagine 899, asparagine 919, asparagine 965, asparagine 991, asparagine 1089, and asparagine 1196 each carry an N-linked (GlcNAc...) asparagine glycan. A compositionally biased stretch (low complexity) spans 889 to 927 (TGTSSTSSPGNTTVNTAQSATHSNSQNQQSNASSTNTQN). Residues 889–936 (TGTSSTSSPGNTTVNTAQSATHSNSQNQQSNASSTNTQNGVAVSSGPA) are disordered. 2 disordered regions span residues 1230–1259 (TPPQ…TQIP) and 1451–1472 (KEKF…DEQK). Residues 1245–1259 (VSGSSGSTKEETQIP) show a composition bias toward polar residues. The span at 1456-1465 (SSPPTTPPSP) shows a compositional bias: pro residues. Asparagine 1588 is a glycosylation site (N-linked (GlcNAc...) asparagine). 2 consecutive EGF-like domains span residues 1592 to 1632 (HQCV…VENP) and 1633 to 1680 (NPTC…IFCS). Cystine bridges form between cysteine 1594–cysteine 1605, cysteine 1599–cysteine 1615, cysteine 1617–cysteine 1628, cysteine 1636–cysteine 1649, cysteine 1643–cysteine 1663, and cysteine 1665–cysteine 1679. Serine 1680 carries the GPI-anchor amidated serine lipid modification. Residues 1681-1701 (SSNFLGISFLLILMLILYSFI) constitute a propeptide, removed in mature form.

In terms of assembly, forms a complex composed of subunits p83, p30, p38, and p42 which remain non-covalently associated; the complex is formed at the merozoite surface prior to egress from host erythrocytes. Forms a complex composed of processed MSP1 subunits, MSP6 subunit p36 and MSP7; the complex is formed at the merozoite surface prior to egress from host erythrocytes. Within the complex, interacts (via subunit p38) with MSP6 subunit p36 and (via subunits p83, p30 and p38) with MSP7 (via subunit p22). Forms a complex composed of MSP1, MSP6, DBLMSP1 and DBLMSP2. Within the complex, interacts (via subunit p38) with DBLMSP1 and DBLMSP2. Forms a complex composed of MSP1, and rhoptry proteins RhopH3, RAP1 and CLAG9/RhopH3. Within the complex, interacts (via subunits p42 and p19) with RhopH3 (via C-terminus). Forms a complex composed of MSP1, MSP6, MSP7, MSP9 and MSP3; within the complex, MSP6 and MSP9 mediate the binding to the host erythrocyte. Interacts (via subunits p19 and p42) with MSP9; the interaction is direct; MSP1 subunits p19 or p42, and MSP9 form a co-ligand complex that interacts with host SLC4A1/Band 3 protein. May interact with PFD6. Interacts with host spectrin. As to quaternary structure, interacts with host glycophorin GYPA in a sialic acid-independent manner. Interacts with host proinflammatory cytokine S100P; the interaction blocks S100P inflammatory and chemotactic activities. In terms of assembly, interacts with host SLC4A1/Band 3 (via 5ABC region) on the host erythrocyte surface in a sialic acid-independent manner. In terms of processing, the p190 precursor is cleaved by SUB1 prior to merozoite egress into 4 subunits p83, p30, p38, and p42 which remain non-covalently associated. SUB1-mediated proteolytic cleavage occurs in an orderly manner; the first cleavage occurs at the p30/p38 site, followed by cleavage at the p83/p30 site, the last cleavage occurs at the p38/p42 site. The order of cleavage is essential for parasite viability. SUB1-mediated processing is essential for merozoite egress. In a second processing step during erythrocyte invasion, p42 is cleaved by SUB2 into p33 and p19; the latter remains attached to the merozoite surface via its GPI-anchor and is endocytosed during the subsequent ring stage.

Its subcellular location is the cell membrane. The protein localises to the secreted. It is found in the vacuole membrane. During the asexual blood stage, involved in merozoite egress from host erythrocytes possibly via its interaction with the host cytoskeleton protein spectrin resulting in the destabilization of the host cytoskeleton and thus leading to erythrocyte cell membrane rupture. Involved in the binding to host erythrocytes and is required for host erythrocyte invasion. Functionally, by binding to host proinflammatory cytokine S100P may interfere with host immune responses. Its function is as follows. Involved in merozoite invasion of host erythrocytes. May play a role in the biogenesis and/or function of the food vacuole during the intraerythrocytic development. The protein is Merozoite surface protein 1 of Plasmodium falciparum (isolate mad20 / Papua New Guinea).